A 264-amino-acid polypeptide reads, in one-letter code: Thymidylate synthase (264 aa).

Arginine 21 lines the dUMP pocket. Histidine 51 contributes to the (6R)-5,10-methylene-5,6,7,8-tetrahydrofolate binding site. DUMP is bound at residue 126-127; that stretch reads RR. Cysteine 146 serves as the catalytic Nucleophile. DUMP contacts are provided by residues 166 to 169, asparagine 177, and 207 to 209; these read RSVD and HLY. Aspartate 169 lines the (6R)-5,10-methylene-5,6,7,8-tetrahydrofolate pocket. (6R)-5,10-methylene-5,6,7,8-tetrahydrofolate is bound at residue alanine 263.

Belongs to the thymidylate synthase family. Bacterial-type ThyA subfamily. Homodimer.

The protein resides in the cytoplasm. The enzyme catalyses dUMP + (6R)-5,10-methylene-5,6,7,8-tetrahydrofolate = 7,8-dihydrofolate + dTMP. It participates in pyrimidine metabolism; dTTP biosynthesis. Its function is as follows. Catalyzes the reductive methylation of 2'-deoxyuridine-5'-monophosphate (dUMP) to 2'-deoxythymidine-5'-monophosphate (dTMP) while utilizing 5,10-methylenetetrahydrofolate (mTHF) as the methyl donor and reductant in the reaction, yielding dihydrofolate (DHF) as a by-product. This enzymatic reaction provides an intracellular de novo source of dTMP, an essential precursor for DNA biosynthesis. In Geobacillus sp. (strain WCH70), this protein is Thymidylate synthase.